Here is a 679-residue protein sequence, read N- to C-terminus: Protein hook (679 aa).

The Calponin-homology (CH) domain occupies 6–123; the sequence is NEMYYSLLEW…RLLQLVLGCA (118 aa). Coiled-coil stretches lie at residues 135–437 and 480–574; these read EIMC…LKCG and QTAL…QEIL.

It belongs to the hook family. In terms of assembly, homodimer. Interacts with microtubules via its N-terminus.

It is found in the cytoplasm. The protein localises to the cytoskeleton. It localises to the endosome. The protein resides in the synapse. Functionally, involved in endocytic trafficking by stabilizing organelles of the endocytic pathway. Probably acts as a cytoskeletal linker protein required to tether endosome vesicles to the cytoskeleton. Involved in modulation of endocytosis at stages required for down-regulation of membrane proteins that control synapse size. Not involved in synaptic vesicle recycling. Required in R7 cells for boss endocytosis into multivesicular bodies (MVBs). Has a role in regulating adult longevity. This chain is Protein hook, found in Drosophila simulans (Fruit fly).